The sequence spans 300 residues: Ribosomal protein L11 methyltransferase (300 aa).

Residues T152, G173, D195, and N234 each coordinate S-adenosyl-L-methionine.

Belongs to the methyltransferase superfamily. PrmA family.

The protein resides in the cytoplasm. The catalysed reaction is L-lysyl-[protein] + 3 S-adenosyl-L-methionine = N(6),N(6),N(6)-trimethyl-L-lysyl-[protein] + 3 S-adenosyl-L-homocysteine + 3 H(+). Methylates ribosomal protein L11. This is Ribosomal protein L11 methyltransferase from Burkholderia orbicola (strain MC0-3).